We begin with the raw amino-acid sequence, 57 residues long: Small ribosomal subunit protein bS21 (57 aa).

Basic and acidic residues predominate over residues 32–42 (VRRREHYEKPS). The disordered stretch occupies residues 32–57 (VRRREHYEKPSQRRKRKLEASRRRRR). Positions 43-57 (QRRKRKLEASRRRRR) are enriched in basic residues.

It belongs to the bacterial ribosomal protein bS21 family.

The polypeptide is Small ribosomal subunit protein bS21 (Synechococcus elongatus (strain ATCC 33912 / PCC 7942 / FACHB-805) (Anacystis nidulans R2)).